A 506-amino-acid polypeptide reads, in one-letter code: Ribose import ATP-binding protein RbsA 2 (506 aa).

2 ABC transporter domains span residues Leu7–Pro242 and Glu250–Asn497. Gly39–Ser46 is a binding site for ATP.

It belongs to the ABC transporter superfamily. Ribose importer (TC 3.A.1.2.1) family. As to quaternary structure, the complex is composed of an ATP-binding protein (RbsA), two transmembrane proteins (RbsC) and a solute-binding protein (RbsB).

It is found in the cell inner membrane. It carries out the reaction D-ribose(out) + ATP + H2O = D-ribose(in) + ADP + phosphate + H(+). Functionally, part of the ABC transporter complex RbsABC involved in ribose import. Responsible for energy coupling to the transport system. The chain is Ribose import ATP-binding protein RbsA 2 from Escherichia coli O157:H7.